A 118-amino-acid polypeptide reads, in one-letter code: Large ribosomal subunit protein eL22 (118 aa).

It belongs to the eukaryotic ribosomal protein eL22 family.

In Tetrahymena thermophila (strain SB210), this protein is Large ribosomal subunit protein eL22 (RPL22).